The chain runs to 105 residues: MTTETIDGVRLTTKANVYFDGKCVSHSFALPDGTKKSVGVVLPATLTFGTAAAEIMECVGGSCEYRLDGSDEWKQSGPGERFQVPANSKFDIRVTEAYHYICHYA.

It belongs to the nucleoside phosphorylase PpnP family.

It catalyses the reaction a purine D-ribonucleoside + phosphate = a purine nucleobase + alpha-D-ribose 1-phosphate. It carries out the reaction adenosine + phosphate = alpha-D-ribose 1-phosphate + adenine. The catalysed reaction is cytidine + phosphate = cytosine + alpha-D-ribose 1-phosphate. The enzyme catalyses guanosine + phosphate = alpha-D-ribose 1-phosphate + guanine. It catalyses the reaction inosine + phosphate = alpha-D-ribose 1-phosphate + hypoxanthine. It carries out the reaction thymidine + phosphate = 2-deoxy-alpha-D-ribose 1-phosphate + thymine. The catalysed reaction is uridine + phosphate = alpha-D-ribose 1-phosphate + uracil. The enzyme catalyses xanthosine + phosphate = alpha-D-ribose 1-phosphate + xanthine. Catalyzes the phosphorolysis of diverse nucleosides, yielding D-ribose 1-phosphate and the respective free bases. Can use uridine, adenosine, guanosine, cytidine, thymidine, inosine and xanthosine as substrates. Also catalyzes the reverse reactions. This is Pyrimidine/purine nucleoside phosphorylase from Ralstonia nicotianae (strain ATCC BAA-1114 / GMI1000) (Ralstonia solanacearum).